The following is a 509-amino-acid chain: Meiotic fizzy-related protein 2 (509 aa).

WD repeat units lie at residues 159–196, 199–238, 242–281, 287–326, 329–371, and 437–477; these read LDDF…SIME, PTTY…NRCD, HHDG…MRRV, VHQE…NKKF, IHLA…RIHS, and IHTH…QEIH.

Belongs to the WD repeat CDC20/Fizzy family.

It is found in the nucleus. Functionally, has a role in meiosis. The polypeptide is Meiotic fizzy-related protein 2 (mfr2) (Schizosaccharomyces pombe (strain 972 / ATCC 24843) (Fission yeast)).